The following is a 1314-amino-acid chain: AT-rich interactive domain-containing protein 4B (1314 aa).

Disordered regions lie at residues 123–169 (LPLT…RKQT) and 266–306 (KTEL…EPFP). Ser276, Ser295, and Ser296 each carry phosphoserine. Over residues 277-305 (EAEEEEEEEDDEKEKEDNSSEEEEEIEPF) the composition is skewed to acidic residues. An ARID domain is found at 306–398 (PEERENFLQQ…YLYGFEEYCR (93 aa)). Glycyl lysine isopeptide (Lys-Gly) (interchain with G-Cter in SUMO2) cross-links involve residues Lys428 and Lys461. Positions 439–464 (NVEDSKNVMPKEETPAEDESERKENI) are enriched in basic and acidic residues. Disordered regions lie at residues 439 to 577 (NVED…KVQV), 635 to 678 (IKHR…SPEM), 709 to 888 (ASES…EEKR), 943 to 1215 (KELF…RLPK), and 1256 to 1290 (VASI…SITA). At Ser482 the chain carries Phosphoserine. Over residues 486-511 (KEAHITKLEENENLEDKDGGRARTEE) the composition is skewed to basic and acidic residues. Residues 531 to 567 (NKEEDEDDEEIEEEEEEDEEEDEDEDDDDNNEEEEFE) are compositionally biased toward acidic residues. Residues 572 to 624 (GMKVQVRYGRGKNQKMYEASIKDSDVEGGEALYLVHYCGWNVRYDEWIKADKI) enclose the Tudor-knot domain. Residues 643-656 (NKLDKEKDRDEKYS) are compositionally biased toward basic and acidic residues. 4 positions are modified to phosphoserine: Ser666, Ser668, Ser675, and Ser717. 2 stretches are compositionally biased toward basic and acidic residues: residues 722-754 (ERCT…KEEQ) and 778-787 (SPERLRKDME). Residue Lys751 forms a Glycyl lysine isopeptide (Lys-Gly) (interchain with G-Cter in SUMO2) linkage. Phosphoserine occurs at positions 778 and 790. Positions 788-800 (AISEDTDFEEEDE) are enriched in acidic residues. At Thr793 the chain carries Phosphothreonine. 3 stretches are compositionally biased toward basic and acidic residues: residues 808 to 817 (VKKDTTDKAL), 841 to 853 (GKKE…KEPL), and 997 to 1012 (KPIE…RKTE). The segment covering 1013-1023 (FPSSGSNSVLN) has biased composition (polar residues). At Ser1016 the chain carries Phosphoserine. Thr1028 is modified (phosphothreonine). Residues 1030 to 1051 (ESPSSVTITEASQQQSSVTVSV) are compositionally biased toward low complexity. Ser1031 carries the phosphoserine modification. Positions 1058-1067 (EEVRSIKSET) are enriched in basic and acidic residues. A compositionally biased stretch (low complexity) spans 1089 to 1103 (SSPAGFDASVSSSSS). The segment covering 1132–1150 (KKQKRSHKATVVNNKKKGK) has biased composition (basic residues). Thr1152 carries the post-translational modification Phosphothreonine. Ser1154, Ser1155, Ser1157, and Ser1161 each carry phosphoserine. Polar residues predominate over residues 1164 to 1186 (ESVTKTQTIKSVPTGMKTHNSKS). The span at 1198-1210 (RNGDKDPDLKEPS) shows a compositional bias: basic and acidic residues. A coiled-coil region spans residues 1227–1272 (ENMTSAERISILQEKLQEIRKHYLSLKSEVASIDRRRKRLKKKERE). A compositionally biased stretch (low complexity) spans 1274 to 1290 (AATSSSSSSPSSSSITA).

As to quaternary structure, component of a Sin3A corepressor complex consisting of SIN3A, SAP130, SUDS3/SAP45, SAP180, HDAC1 and HDAC2. Interacts with ARID4A. Interacts with AR. As to expression, expressed in Sertoli cells of the testis.

Its subcellular location is the nucleus. Functionally, acts as a transcriptional repressor. May function in the assembly and/or enzymatic activity of the Sin3A corepressor complex or in mediating interactions between the complex and other regulatory complexes. Plays a role in the regulation of epigenetic modifications at the PWS/AS imprinting center near the SNRPN promoter, where it might function as part of a complex with RB1 and ARID4A. Involved in spermatogenesis, together with ARID4A, where it functions as a transcriptional coactivator for AR (androgen receptor) and enhances expression of genes required for sperm maturation. Regulates expression of the tight junction protein CLDN3 in the testis, which is important for integrity of the blood-testis barrier. Plays a role in myeloid homeostasis where it regulates the histone methylation state of bone marrow cells and expression of various genes involved in hematopoiesis. May function as a leukemia suppressor. The polypeptide is AT-rich interactive domain-containing protein 4B (Arid4b) (Mus musculus (Mouse)).